Here is a 324-residue protein sequence, read N- to C-terminus: UDP-N-acetylenolpyruvoylglucosamine reductase (324 aa).

Residues 36 to 211 (FRAGGLAELM…AEDKAKIRND (176 aa)) form the FAD-binding PCMH-type domain. Residue Arg183 is part of the active site. Ser232 (proton donor) is an active-site residue. The active site involves Glu302.

This sequence belongs to the MurB family. Requires FAD as cofactor.

The protein resides in the cytoplasm. The catalysed reaction is UDP-N-acetyl-alpha-D-muramate + NADP(+) = UDP-N-acetyl-3-O-(1-carboxyvinyl)-alpha-D-glucosamine + NADPH + H(+). The protein operates within cell wall biogenesis; peptidoglycan biosynthesis. Its function is as follows. Cell wall formation. In Sinorhizobium medicae (strain WSM419) (Ensifer medicae), this protein is UDP-N-acetylenolpyruvoylglucosamine reductase.